A 131-amino-acid polypeptide reads, in one-letter code: Small nuclear ribonucleoprotein SmD3b (131 aa).

The 73-residue stretch at 7-79 (IPVKLLHEAS…VRFMVIPDIL (73 aa)) folds into the Sm domain. The segment at 96–131 (SSSLGVGRGRGAMRGKPAAGPGRGTGGRGAVPPVRR) is disordered.

Belongs to the snRNP core protein family. Expressed in young seedlings, roots, leaves, flowers and immature siliques.

The protein localises to the cytoplasm. The protein resides in the cytosol. Its subcellular location is the nucleus. Its function is as follows. Core component of the spliceosomal U1, U2, U4 and U5 small nuclear ribonucleoproteins (snRNPs), the building blocks of the spliceosome. May play a major role in the splicing of cellular pre-mRNAs. Required for normal plant development. The polypeptide is Small nuclear ribonucleoprotein SmD3b (Arabidopsis thaliana (Mouse-ear cress)).